A 324-amino-acid chain; its full sequence is Phospho-N-acetylmuramoyl-pentapeptide-transferase (324 aa).

The next 10 membrane-spanning stretches (helical) occupy residues 5 to 25 (IIVI…PLFI), 52 to 72 (PTMG…WVTA), 76 to 96 (VLSA…VLGF), 117 to 137 (FIGQ…SGFS), 147 to 167 (WSFD…VGGS), 176 to 196 (LDGL…VLAW), 203 to 223 (VAVF…FNAH), 227 to 247 (VFMG…VAVL), 250 to 270 (LELL…SVII), and 302 to 322 (IVVT…YIEV).

This sequence belongs to the glycosyltransferase 4 family. MraY subfamily. Mg(2+) serves as cofactor.

The protein resides in the cell membrane. The catalysed reaction is UDP-N-acetyl-alpha-D-muramoyl-L-alanyl-gamma-D-glutamyl-meso-2,6-diaminopimeloyl-D-alanyl-D-alanine + di-trans,octa-cis-undecaprenyl phosphate = di-trans,octa-cis-undecaprenyl diphospho-N-acetyl-alpha-D-muramoyl-L-alanyl-D-glutamyl-meso-2,6-diaminopimeloyl-D-alanyl-D-alanine + UMP. It participates in cell wall biogenesis; peptidoglycan biosynthesis. Catalyzes the initial step of the lipid cycle reactions in the biosynthesis of the cell wall peptidoglycan: transfers peptidoglycan precursor phospho-MurNAc-pentapeptide from UDP-MurNAc-pentapeptide onto the lipid carrier undecaprenyl phosphate, yielding undecaprenyl-pyrophosphoryl-MurNAc-pentapeptide, known as lipid I. The chain is Phospho-N-acetylmuramoyl-pentapeptide-transferase from Geobacillus thermodenitrificans (strain NG80-2).